The chain runs to 451 residues: tRNA-2-methylthio-N(6)-dimethylallyladenosine synthase (451 aa).

In terms of domain architecture, MTTase N-terminal spans 1–116 (MTYFFETYGC…LPQIFDEIKA (116 aa)). Positions 10, 46, 79, 162, 166, and 169 each coordinate [4Fe-4S] cluster. In terms of domain architecture, Radical SAM core spans 148 to 384 (SPKSFQSYVP…IDLQLKITAK (237 aa)). Residues 387–451 (KAKLGKKVDI…KGKTFRANLN (65 aa)) enclose the TRAM domain.

Belongs to the methylthiotransferase family. MiaB subfamily. As to quaternary structure, monomer. [4Fe-4S] cluster is required as a cofactor.

It is found in the cytoplasm. The enzyme catalyses N(6)-dimethylallyladenosine(37) in tRNA + (sulfur carrier)-SH + AH2 + 2 S-adenosyl-L-methionine = 2-methylsulfanyl-N(6)-dimethylallyladenosine(37) in tRNA + (sulfur carrier)-H + 5'-deoxyadenosine + L-methionine + A + S-adenosyl-L-homocysteine + 2 H(+). Its function is as follows. Catalyzes the methylthiolation of N6-(dimethylallyl)adenosine (i(6)A), leading to the formation of 2-methylthio-N6-(dimethylallyl)adenosine (ms(2)i(6)A) at position 37 in tRNAs that read codons beginning with uridine. The polypeptide is tRNA-2-methylthio-N(6)-dimethylallyladenosine synthase (Treponema denticola (strain ATCC 35405 / DSM 14222 / CIP 103919 / JCM 8153 / KCTC 15104)).